The following is a 541-amino-acid chain: Zinc finger protein 513 (541 aa).

The segment at 1–118 (MPRRKQSHPQ…GEARGERPGP (118 aa)) is disordered. Positions 44–57 (LEFEEEEEEEEGDG) are enriched in acidic residues. A phosphoserine mark is found at S85 and S96. Residues 103 to 115 (EPARGPGEARGER) are compositionally biased toward basic and acidic residues. 8 consecutive C2H2-type zinc fingers follow at residues 150–172 (YSCRLCTFVSHYSSHLKRHMQTH), 178–200 (FRCGRCPYASAQLVNLTRHTRTH), 206–228 (YRCPHCPFACSSLGNLRRHQRTH), 360–382 (FACSLCPFATHYPNHLARHMKTH), 388–410 (FRCARCPYASAHLDNLKRHQRVH), 416–438 (YKCPLCPYACGNLANLKRHGRIH), 444–466 (FRCSLCNYSCNQSMNLKRHMLRH), and 472–494 (FRCATCAYTTGHWDNYKRHQKVH). Residues 492–541 (KVHGHGGAGGPGLSASEGWAPPHSPPSVLSSRGPPALGTAGSRAVHTDSS) form a disordered region.

The protein belongs to the krueppel C2H2-type zinc-finger protein family. Binds DNA. Can associate with the proximal promoter regions of PAX6 and SP4, and their known targets including ARR3, RHO, OPN1MW2 and OPN1SW. In the retina, expressed in the outer and inner nuclear layers, and the ganglion cell layer.

The protein resides in the nucleus. Its function is as follows. Transcriptional regulator that plays a role in retinal development and maintenance. This chain is Zinc finger protein 513 (ZNF513), found in Homo sapiens (Human).